Consider the following 221-residue polypeptide: NAD(P)H-hydrate epimerase (221 aa).

One can recognise a YjeF N-terminal domain in the interval 9–219 (MRELETAAVK…NIGLPKELLS (211 aa)). Residue 60-64 (GNGGD) coordinates (6S)-NADPHX. Residues Asn61 and Asp131 each coordinate K(+). Residues 135–141 (GIGFKGE), Tyr146, and Asp164 each bind (6S)-NADPHX. Residue Ser167 participates in K(+) binding.

Belongs to the NnrE/AIBP family. The cofactor is K(+).

The enzyme catalyses (6R)-NADHX = (6S)-NADHX. It catalyses the reaction (6R)-NADPHX = (6S)-NADPHX. Its function is as follows. Catalyzes the epimerization of the S- and R-forms of NAD(P)HX, a damaged form of NAD(P)H that is a result of enzymatic or heat-dependent hydration. This is a prerequisite for the S-specific NAD(P)H-hydrate dehydratase to allow the repair of both epimers of NAD(P)HX. The protein is NAD(P)H-hydrate epimerase of Elusimicrobium minutum (strain Pei191).